We begin with the raw amino-acid sequence, 881 residues long: Nitrate reductase [NADH] 1 (881 aa).

Residues 1-46 (MAASVEHRPFTSHQHGVVRSFKSYPDVPRPKKLPLPQPLSDSTNDN) form a disordered region. C167 lines the Mo-molybdopterin pocket. The Cytochrome b5 heme-binding domain occupies 515–590 (TKSYSLSEVR…LEDYRIGELM (76 aa)). Residues H550 and H573 each coordinate heme. One can recognise an FAD-binding FR-type domain in the interval 625–737 (REKIPCKLLS…KGPLGHIEYT (113 aa)). FAD-binding positions include 677-680 (RAYT), 694-698 (VVKVY), F699, F706, 711-713 (IMS), and T764.

This sequence belongs to the nitrate reductase family. In terms of assembly, homodimer. FAD is required as a cofactor. Heme serves as cofactor. It depends on Mo-molybdopterin as a cofactor.

The catalysed reaction is nitrite + NAD(+) + H2O = nitrate + NADH + H(+). Its function is as follows. Nitrate reductase is a key enzyme involved in the first step of nitrate assimilation in plants, fungi and bacteria. This chain is Nitrate reductase [NADH] 1 (NIA1), found in Phaseolus vulgaris (Kidney bean).